A 246-amino-acid polypeptide reads, in one-letter code: Probable cytokinin riboside 5'-monophosphate phosphoribohydrolase LOGL5 (246 aa).

Over residues Met-1–Gln-10 the composition is skewed to basic and acidic residues. The interval Met-1–Thr-28 is disordered. Residues Glu-103, Arg-121–Lys-122, Gly-138–Glu-144, and Thr-150 contribute to the substrate site.

Belongs to the LOG family. In terms of tissue distribution, expressed in roots and leaves.

The enzyme catalyses N(6)-(dimethylallyl)adenosine 5'-phosphate + H2O = N(6)-dimethylallyladenine + D-ribose 5-phosphate. It catalyses the reaction 9-ribosyl-trans-zeatin 5'-phosphate + H2O = trans-zeatin + D-ribose 5-phosphate. Its function is as follows. Cytokinin-activating enzyme working in the direct activation pathway. Phosphoribohydrolase that converts inactive cytokinin nucleotides to the biologically active free-base forms. This is Probable cytokinin riboside 5'-monophosphate phosphoribohydrolase LOGL5 (LOGL5) from Oryza sativa subsp. japonica (Rice).